A 439-amino-acid polypeptide reads, in one-letter code: Trigger factor (439 aa).

One can recognise a PPIase FKBP-type domain in the interval 162 to 247; that stretch reads GDTVTIDYVG…IHEVKAKQLP (86 aa).

This sequence belongs to the FKBP-type PPIase family. Tig subfamily.

The protein resides in the cytoplasm. The enzyme catalyses [protein]-peptidylproline (omega=180) = [protein]-peptidylproline (omega=0). Involved in protein export. Acts as a chaperone by maintaining the newly synthesized protein in an open conformation. Functions as a peptidyl-prolyl cis-trans isomerase. The polypeptide is Trigger factor (Lactobacillus delbrueckii subsp. bulgaricus (strain ATCC 11842 / DSM 20081 / BCRC 10696 / JCM 1002 / NBRC 13953 / NCIMB 11778 / NCTC 12712 / WDCM 00102 / Lb 14)).